We begin with the raw amino-acid sequence, 303 residues long: Aspartate carbamoyltransferase catalytic subunit (303 aa).

Carbamoyl phosphate contacts are provided by arginine 54 and threonine 55. Lysine 82 is a binding site for L-aspartate. Arginine 104, histidine 132, and glutamine 135 together coordinate carbamoyl phosphate. Residues arginine 165 and arginine 221 each coordinate L-aspartate. 2 residues coordinate carbamoyl phosphate: glycine 261 and proline 262.

The protein belongs to the aspartate/ornithine carbamoyltransferase superfamily. ATCase family. Heterododecamer (2C3:3R2) of six catalytic PyrB chains organized as two trimers (C3), and six regulatory PyrI chains organized as three dimers (R2).

It carries out the reaction carbamoyl phosphate + L-aspartate = N-carbamoyl-L-aspartate + phosphate + H(+). It participates in pyrimidine metabolism; UMP biosynthesis via de novo pathway; (S)-dihydroorotate from bicarbonate: step 2/3. Functionally, catalyzes the condensation of carbamoyl phosphate and aspartate to form carbamoyl aspartate and inorganic phosphate, the committed step in the de novo pyrimidine nucleotide biosynthesis pathway. This chain is Aspartate carbamoyltransferase catalytic subunit, found in Koribacter versatilis (strain Ellin345).